A 388-amino-acid chain; its full sequence is Chorismate synthase (388 aa).

Residues Arg-39 and Arg-45 each contribute to the NADP(+) site. FMN is bound by residues 130-132, 251-252, Gly-296, 311-315, and Arg-337; these read RSS, NA, and KPIPT.

The protein belongs to the chorismate synthase family. In terms of assembly, homotetramer. FMNH2 is required as a cofactor.

It carries out the reaction 5-O-(1-carboxyvinyl)-3-phosphoshikimate = chorismate + phosphate. Its pathway is metabolic intermediate biosynthesis; chorismate biosynthesis; chorismate from D-erythrose 4-phosphate and phosphoenolpyruvate: step 7/7. In terms of biological role, catalyzes the anti-1,4-elimination of the C-3 phosphate and the C-6 proR hydrogen from 5-enolpyruvylshikimate-3-phosphate (EPSP) to yield chorismate, which is the branch point compound that serves as the starting substrate for the three terminal pathways of aromatic amino acid biosynthesis. This reaction introduces a second double bond into the aromatic ring system. The sequence is that of Chorismate synthase from Streptococcus pyogenes serotype M3 (strain SSI-1).